The primary structure comprises 352 residues: Galactokinase (352 aa).

A substrate-binding site is contributed by 14-17 (EHTD). Residues serine 46 and 96–102 (GAGLSSS) each bind ATP. Residues serine 102 and glutamate 134 each coordinate Mg(2+). Aspartate 146 functions as the Proton acceptor in the catalytic mechanism. Tyrosine 196 lines the substrate pocket.

It belongs to the GHMP kinase family. GalK subfamily.

The protein localises to the cytoplasm. It carries out the reaction alpha-D-galactose + ATP = alpha-D-galactose 1-phosphate + ADP + H(+). The protein operates within carbohydrate metabolism; galactose metabolism. Functionally, catalyzes the transfer of the gamma-phosphate of ATP to D-galactose to form alpha-D-galactose-1-phosphate (Gal-1-P). The sequence is that of Galactokinase from Thermosipho africanus (strain TCF52B).